A 318-amino-acid polypeptide reads, in one-letter code: HPr kinase/phosphorylase (318 aa).

Residues histidine 146 and lysine 167 contribute to the active site. ATP is bound at residue 161–168; sequence GESGLGKS. A Mg(2+)-binding site is contributed by serine 168. The active-site Proton acceptor; for phosphorylation activity. Proton donor; for dephosphorylation activity is the aspartate 185. The interval 209-218 is important for the catalytic mechanism of both phosphorylation and dephosphorylation; it reads LEVRGIGLLD. A Mg(2+)-binding site is contributed by glutamate 210. Residue arginine 252 is part of the active site. Residues 273 to 278 are important for the catalytic mechanism of dephosphorylation; it reads QVVAGR.

Belongs to the HPrK/P family. As to quaternary structure, homohexamer. Mg(2+) is required as a cofactor.

It catalyses the reaction [HPr protein]-L-serine + ATP = [HPr protein]-O-phospho-L-serine + ADP + H(+). The catalysed reaction is [HPr protein]-O-phospho-L-serine + phosphate + H(+) = [HPr protein]-L-serine + diphosphate. Catalyzes the ATP- as well as the pyrophosphate-dependent phosphorylation of a specific serine residue in HPr, a phosphocarrier protein of the phosphoenolpyruvate-dependent sugar phosphotransferase system (PTS). HprK/P also catalyzes the pyrophosphate-producing, inorganic phosphate-dependent dephosphorylation (phosphorolysis) of seryl-phosphorylated HPr (P-Ser-HPr). This chain is HPr kinase/phosphorylase, found in Verminephrobacter eiseniae (strain EF01-2).